The chain runs to 356 residues: Tyrosinase P (356 aa).

An N-terminal signal peptide occupies residues 1 to 19; sequence MGFYRNLVLVAASCTQALG. N-linked (GlcNAc...) asparagine glycosylation occurs at N81. Cu cation contacts are provided by H87 and H96. N148 and N193 each carry an N-linked (GlcNAc...) asparagine glycan. Cu cation is bound at residue H203. Residue N226 is glycosylated (N-linked (GlcNAc...) asparagine). 2 residues coordinate Cu cation: H263 and H286. N309 carries N-linked (GlcNAc...) asparagine glycosylation.

This sequence belongs to the tyrosinase family. Requires Cu(2+) as cofactor. Glycosylated.

The protein resides in the endoplasmic reticulum lumen. It is found in the golgi apparatus lumen. The catalysed reaction is aspulvinone E + O2 = (5Z)-3-(3,4-dihydroxyphenyl)-5-[(3,4-dihydroxyphenyl)methylidene]-5-oxo-2,5-dihydrofuran-3-olate. It catalyses the reaction aspulvinone E + O2 = (2Z)-2-[(3,4-dioxocyclohexa-1,5-dien-1-yl)methylidene]-4-(4-hydroxyphenyl)-5-oxo-2,5-dihydrofuran-3-olate + H2O. Its activity is regulated as follows. Activity is inhibited by the presence of dithiothreitol (DTT). Its function is as follows. Tyrosinase; part of the gene cluster that mediates the biosynthesis of Asp-melanin, a pigment that confers resistance against UV light and hampers phagocytosis by soil amoeba. The nonribosomal peptide synthase melA converts 4-hydroxyphenylpyruvate (4-HPPA) to aspulvinone E. The tyrosinase tyrP then performs hydroxylations of both aromatic moieties of aspulvinone E. The product of tyrP is highly unstable, and, due to the high reactivity of methides and ortho-diquinones, the polymeric Asp-melanin forms spontaneously. The polypeptide is Tyrosinase P (tyrP) (Aspergillus terreus).